The following is a 62-amino-acid chain: U8-theraphotoxin-Cg1a 2 (62 aa).

An N-terminal signal peptide occupies residues 1-21; the sequence is MKTLVLFIIFGLAALFLLSSA. Positions 22–29 are excised as a propeptide; that stretch reads TELEETER. 3 disulfide bridges follow: Cys-31-Cys-46, Cys-38-Cys-51, and Cys-45-Cys-58.

The protein belongs to the neurotoxin 10 (Hwtx-1) family. 30 (Jztx-14) subfamily. Expressed by the venom gland.

The protein localises to the secreted. Probable ion channel inhibitor. This Chilobrachys guangxiensis (Chinese earth tiger tarantula) protein is U8-theraphotoxin-Cg1a 2.